We begin with the raw amino-acid sequence, 297 residues long: 4-hydroxy-tetrahydrodipicolinate synthase (297 aa).

Pyruvate is bound at residue Thr-46. Tyr-134 (proton donor/acceptor) is an active-site residue. Lys-162 serves as the catalytic Schiff-base intermediate with substrate. Pyruvate is bound at residue Ile-204.

This sequence belongs to the DapA family. As to quaternary structure, homotetramer; dimer of dimers.

Its subcellular location is the cytoplasm. It catalyses the reaction L-aspartate 4-semialdehyde + pyruvate = (2S,4S)-4-hydroxy-2,3,4,5-tetrahydrodipicolinate + H2O + H(+). It participates in amino-acid biosynthesis; L-lysine biosynthesis via DAP pathway; (S)-tetrahydrodipicolinate from L-aspartate: step 3/4. In terms of biological role, catalyzes the condensation of (S)-aspartate-beta-semialdehyde [(S)-ASA] and pyruvate to 4-hydroxy-tetrahydrodipicolinate (HTPA). This chain is 4-hydroxy-tetrahydrodipicolinate synthase, found in Stenotrophomonas maltophilia (strain R551-3).